We begin with the raw amino-acid sequence, 510 residues long: Cytochrome P450 monooxygenase btcC (510 aa).

A helical transmembrane segment spans residues 1–21; that stretch reads MSFPGVIFVVSFFPLLMGIAV. C446 contacts heme.

The protein belongs to the cytochrome P450 family. Heme serves as cofactor.

It is found in the membrane. It participates in secondary metabolite biosynthesis; terpenoid biosynthesis. Functionally, cytochrome P450 monooxygenase; part of the gene cluster that mediates the biosynthesis of betaestacins. The bifunctional terpene synthase btcA converts isopentenyl diphosphate (IPP) and dimethylallyl diphosphate (DMAPP) into the sesterterpene betaestacin I. The C-terminal prenyltransferase (PT) domain of btcA catalyzes formation of GFPP, whereas the N-terminal terpene cyclase (TC) domain catalyzes the cyclization of GFPP into betaestacin I. The cytochrome P450 monooxygenase btcB is then responsible for the six-step oxidation of betaestacin I to yield betaestacin II. The roles of the cytochrome P450 monooxygenase btcC and the alpha-ketoglutarate-dependent dioxygenase btcD have not been identified yet. The polypeptide is Cytochrome P450 monooxygenase btcC (Neocamarosporium betae (Beet black rot fungus)).